Reading from the N-terminus, the 411-residue chain is Snake venom metalloproteinase VMP1 (411 aa).

A signal peptide spans 1–20 (MIQVLLVTICLAAFPYQGSS). A propeptide spanning residues 21 to 189 (IILESGNVND…KKAFQLNLTP (169 aa)) is cleaved from the precursor. The region spanning 197–393 (RYVELVIIAD…KNPQCILNKP (197 aa)) is the Peptidase M12B domain. Ca(2+) is bound by residues Glu-200 and Asp-284. Disulfide bonds link Cys-308–Cys-388, Cys-348–Cys-372, and Cys-350–Cys-355. Asn-311 carries N-linked (GlcNAc...) asparagine glycosylation. His-333 contacts Zn(2+). The active site involves Glu-334. Residues His-337 and His-343 each coordinate Zn(2+). Positions 388, 391, 403, 406, 408, and 410 each coordinate Ca(2+).

Belongs to the venom metalloproteinase (M12B) family. P-I subfamily. In terms of assembly, monomer. It depends on Zn(2+) as a cofactor. Expressed by the venom gland.

It localises to the secreted. Inhibited by EDTA and 1,10-phenanthroline, but not by PMSF. This venom zinc protease has fibrinolytic activity. The recombinant enzyme cleaves both alpha- (FGA) and beta-chains (FGB) of fibrinogen, but not the gamma-chain. The recombinant protein does not produce hemorrhage in mice and does not have effect on ADP- or collagen-stimulated platelet aggregation. This is Snake venom metalloproteinase VMP1 from Agkistrodon piscivorus leucostoma (Western cottonmouth).